We begin with the raw amino-acid sequence, 88 residues long: Small ribosomal subunit protein uS15 (88 aa).

It belongs to the universal ribosomal protein uS15 family. In terms of assembly, part of the 30S ribosomal subunit. Forms a bridge to the 50S subunit in the 70S ribosome, contacting the 23S rRNA.

In terms of biological role, one of the primary rRNA binding proteins, it binds directly to 16S rRNA where it helps nucleate assembly of the platform of the 30S subunit by binding and bridging several RNA helices of the 16S rRNA. Forms an intersubunit bridge (bridge B4) with the 23S rRNA of the 50S subunit in the ribosome. The sequence is that of Small ribosomal subunit protein uS15 from Borrelia garinii subsp. bavariensis (strain ATCC BAA-2496 / DSM 23469 / PBi) (Borreliella bavariensis).